The sequence spans 153 residues: Aspartate carbamoyltransferase regulatory chain (153 aa).

Positions 109, 114, 138, and 141 each coordinate Zn(2+).

The protein belongs to the PyrI family. Contains catalytic and regulatory chains. Zn(2+) serves as cofactor.

Involved in allosteric regulation of aspartate carbamoyltransferase. In Salmonella paratyphi A (strain ATCC 9150 / SARB42), this protein is Aspartate carbamoyltransferase regulatory chain.